Here is a 220-residue protein sequence, read N- to C-terminus: Elongation factor Ts (220 aa).

An involved in Mg(2+) ion dislocation from EF-Tu region spans residues 83-86 (TDFV).

It belongs to the EF-Ts family.

Its subcellular location is the cytoplasm. In terms of biological role, associates with the EF-Tu.GDP complex and induces the exchange of GDP to GTP. It remains bound to the aminoacyl-tRNA.EF-Tu.GTP complex up to the GTP hydrolysis stage on the ribosome. This chain is Elongation factor Ts, found in Synechococcus sp. (strain CC9605).